The following is a 592-amino-acid chain: Protein kinase C zeta type (592 aa).

In terms of domain architecture, PB1 spans 15-98 (RVRLKAHYGG…EGLIIHVFPS (84 aa)). Positions 79 to 145 (AFRLARQCRD…KRFNRRAYCG (67 aa)) are interaction with SQSTM1. Residues 130–180 (GHLFQAKRFNRRAYCGQCSERIWGLARQGYRCINCKLLVHKRCHGLVPLTC) form a Phorbol-ester/DAG-type zinc finger. A Protein kinase domain is found at 252–518 (FDLIRVIGRG…FSDIKSHAFF (267 aa)). ATP contacts are provided by residues 258 to 266 (IGRGSYAKV) and Lys-281. Asp-376 serves as the catalytic Proton acceptor. Position 410 is a phosphothreonine; by PDPK1 and PI3K (Thr-410). Residues 519–590 (RSIDWDLLEK…INPLLLSTEE (72 aa)) form the AGC-kinase C-terminal domain. Thr-560 is subject to Phosphothreonine. Ser-591 bears the Phosphoserine mark.

The protein belongs to the protein kinase superfamily. AGC Ser/Thr protein kinase family. PKC subfamily. As to quaternary structure, forms a ternary complex with SQSTM1 and KCNAB2. Forms another ternary complex with SQSTM1 and GABRR3. Forms a complex with SQSTM1 and MAP2K5. Interacts with PARD6A, PARD6B, PARD6G and SQSTM1. Part of a complex with PARD3, PARD6A or PARD6B or PARD6G and CDC42 or RAC1. Interacts with ADAP1/CENTA1. Forms a ternary complex composed of SQSTM1 and PAWR. Interacts directly with SQSTM1. Interacts with IKBKB. Interacts (via the protein kinase domain) with WWC1. Forms a tripartite complex with WWC1 and DDR1, but predominantly in the absence of collagen. Component of the Par polarity complex, composed of at least phosphorylated PRKCZ, PARD3 and TIAM1. Interacts with PDPK1 (via N-terminal region). Interacts with WDFY2 (via WD repeats 1-3). Interacts with VAMP2. Forms a complex with WDFY2 and VAMP2. Interacts with APPL1. Interacts with WWC1, WWC2 and WWC3. Post-translationally, CDH5 is required for its phosphorylation at Thr-410. Phosphorylated by protein kinase PDPK1; phosphorylation is inhibited by the apoptotic C-terminal cleavage product of PKN2. Phosphorylation at Thr-410 by PI3K activates the kinase. Expressed in brain, and to a lesser extent in lung, kidney and testis.

Its subcellular location is the cytoplasm. It is found in the endosome. The protein localises to the cell junction. It localises to the membrane. The catalysed reaction is L-seryl-[protein] + ATP = O-phospho-L-seryl-[protein] + ADP + H(+). It catalyses the reaction L-threonyl-[protein] + ATP = O-phospho-L-threonyl-[protein] + ADP + H(+). With respect to regulation, atypical PKCs (PRKCI and PRKCZ) exhibit an elevated basal enzymatic activity (that may be due to the interaction with SMG1 or SQSTM1) and are not regulated by diacylglycerol, phosphatidylserine, phorbol esters or calcium ions. Two specific sites, Thr-410 (activation loop of the kinase domain) and Thr-560 (turn motif), need to be phosphorylated for its full activation. Phosphatidylinositol 3,4,5-trisphosphate might be a physiological activator. Isoform 2: Constitutively active. Functionally, calcium- and diacylglycerol-independent serine/threonine-protein kinase that functions in phosphatidylinositol 3-kinase (PI3K) pathway and mitogen-activated protein (MAP) kinase cascade, and is involved in NF-kappa-B activation, mitogenic signaling, cell proliferation, cell polarity, inflammatory response and maintenance of long-term potentiation (LTP). Upon lipopolysaccharide (LPS) treatment in macrophages, or following mitogenic stimuli, functions downstream of PI3K to activate MAP2K1/MEK1-MAPK1/ERK2 signaling cascade independently of RAF1 activation. Required for insulin-dependent activation of AKT3, but may function as an adapter rather than a direct activator. Upon insulin treatment may act as a downstream effector of PI3K and contribute to the activation of translocation of the glucose transporter SLC2A4/GLUT4 and subsequent glucose transport in adipocytes. In EGF-induced cells, binds and activates MAP2K5/MEK5-MAPK7/ERK5 independently of its kinase activity and can activate JUN promoter through MEF2C. Through binding with SQSTM1/p62, functions in interleukin-1 signaling and activation of NF-kappa-B with the specific adapters RIPK1 and TRAF6. Participates in TNF-dependent transactivation of NF-kappa-B by phosphorylating and activating IKBKB kinase, which in turn leads to the degradation of NF-kappa-B inhibitors. In migrating astrocytes, forms a cytoplasmic complex with PARD6A and is recruited by CDC42 to function in the establishment of cell polarity along with the microtubule motor and dynein. In association with FEZ1, stimulates neuronal differentiation in PC12 cells. In the inflammatory response, is required for the T-helper 2 (Th2) differentiation process, including interleukin production, efficient activation of JAK1 and the subsequent phosphorylation and nuclear translocation of STAT6. May be involved in development of allergic airway inflammation (asthma), a process dependent on Th2 immune response. In the NF-kappa-B-mediated inflammatory response, can relieve SETD6-dependent repression of NF-kappa-B target genes by phosphorylating the RELA subunit at 'Ser-311'. Phosphorylates VAMP2 in vitro. Phosphorylates and activates LRRK1, which phosphorylates RAB proteins involved in intracellular trafficking. Its function is as follows. Involved in late synaptic long term potention phase in CA1 hippocampal cells and long term memory maintenance. The protein is Protein kinase C zeta type (PRKCZ) of Homo sapiens (Human).